A 267-amino-acid polypeptide reads, in one-letter code: Tryptophan synthase alpha chain (267 aa).

Catalysis depends on proton acceptor residues glutamate 47 and aspartate 58.

This sequence belongs to the TrpA family. In terms of assembly, tetramer of two alpha and two beta chains.

The catalysed reaction is (1S,2R)-1-C-(indol-3-yl)glycerol 3-phosphate + L-serine = D-glyceraldehyde 3-phosphate + L-tryptophan + H2O. It participates in amino-acid biosynthesis; L-tryptophan biosynthesis; L-tryptophan from chorismate: step 5/5. Functionally, the alpha subunit is responsible for the aldol cleavage of indoleglycerol phosphate to indole and glyceraldehyde 3-phosphate. The polypeptide is Tryptophan synthase alpha chain (Chlorobium phaeobacteroides (strain DSM 266 / SMG 266 / 2430)).